Reading from the N-terminus, the 148-residue chain is MPTHTSKTRKLRGHVSAGHGRIGKHRKHPGGRGKAGGLQHLRSHFDKYHPGYFGKVGMRRFHLMKNPLWRPTVNLDRLWTLVPNETREKYLGKNTEVAPVINVLQSGYGKVLGKGRLPDTPVIIQTRYVSRRAEEKIKQAGGVVELIA.

2 stretches are compositionally biased toward basic residues: residues 1–13 (MPTH…KLRG) and 21–31 (RIGKHRKHPGG). The tract at residues 1-38 (MPTHTSKTRKLRGHVSAGHGRIGKHRKHPGGRGKAGGL) is disordered. Tyrosine 108 bears the Phosphotyrosine mark.

The protein belongs to the universal ribosomal protein uL15 family. In terms of assembly, component of the large ribosomal subunit (LSU). Mature yeast ribosomes consist of a small (40S) and a large (60S) subunit. The 40S small subunit contains 1 molecule of ribosomal RNA (18S rRNA) and at least 33 different proteins. The large 60S subunit contains 3 rRNA molecules (25S, 5.8S and 5S rRNA) and at least 46 different proteins.

Its subcellular location is the cytoplasm. It is found in the nucleus. The protein localises to the nucleolus. Its function is as follows. Component of the ribosome, a large ribonucleoprotein complex responsible for the synthesis of proteins in the cell. The small ribosomal subunit (SSU) binds messenger RNAs (mRNAs) and translates the encoded message by selecting cognate aminoacyl-transfer RNA (tRNA) molecules. The large subunit (LSU) contains the ribosomal catalytic site termed the peptidyl transferase center (PTC), which catalyzes the formation of peptide bonds, thereby polymerizing the amino acids delivered by tRNAs into a polypeptide chain. The nascent polypeptides leave the ribosome through a tunnel in the LSU and interact with protein factors that function in enzymatic processing, targeting, and the membrane insertion of nascent chains at the exit of the ribosomal tunnel. In Schizosaccharomyces pombe (strain 972 / ATCC 24843) (Fission yeast), this protein is Large ribosomal subunit protein uL15B (rpl2801).